The primary structure comprises 480 residues: Ribulose bisphosphate carboxylase large chain (480 aa).

Positions 1-2 (MS) are excised as a propeptide. Residue proline 3 is modified to N-acetylproline. N6,N6,N6-trimethyllysine is present on lysine 14. Positions 123 and 173 each coordinate substrate. Lysine 175 acts as the Proton acceptor in catalysis. Lysine 177 contacts substrate. Lysine 201, aspartate 203, and glutamate 204 together coordinate Mg(2+). Lysine 201 carries the post-translational modification N6-carboxylysine. The active-site Proton acceptor is the histidine 294. Residues arginine 295, histidine 327, and serine 379 each coordinate substrate.

It belongs to the RuBisCO large chain family. Type I subfamily. Heterohexadecamer of 8 large chains and 8 small chains; disulfide-linked. The disulfide link is formed within the large subunit homodimers. Mg(2+) is required as a cofactor. In terms of processing, the disulfide bond which can form in the large chain dimeric partners within the hexadecamer appears to be associated with oxidative stress and protein turnover.

The protein localises to the plastid. Its subcellular location is the chloroplast. The enzyme catalyses 2 (2R)-3-phosphoglycerate + 2 H(+) = D-ribulose 1,5-bisphosphate + CO2 + H2O. It carries out the reaction D-ribulose 1,5-bisphosphate + O2 = 2-phosphoglycolate + (2R)-3-phosphoglycerate + 2 H(+). RuBisCO catalyzes two reactions: the carboxylation of D-ribulose 1,5-bisphosphate, the primary event in carbon dioxide fixation, as well as the oxidative fragmentation of the pentose substrate in the photorespiration process. Both reactions occur simultaneously and in competition at the same active site. The protein is Ribulose bisphosphate carboxylase large chain of Acorus calamus var. americanus (American sweet flag).